A 181-amino-acid chain; its full sequence is Adenine phosphoribosyltransferase (181 aa).

Belongs to the purine/pyrimidine phosphoribosyltransferase family. As to quaternary structure, homodimer.

It is found in the cytoplasm. It catalyses the reaction AMP + diphosphate = 5-phospho-alpha-D-ribose 1-diphosphate + adenine. It functions in the pathway purine metabolism; AMP biosynthesis via salvage pathway; AMP from adenine: step 1/1. Its function is as follows. Catalyzes a salvage reaction resulting in the formation of AMP, that is energically less costly than de novo synthesis. The protein is Adenine phosphoribosyltransferase of Rhodopseudomonas palustris (strain HaA2).